We begin with the raw amino-acid sequence, 433 residues long: tRNA(Ile2) 2-agmatinylcytidine synthetase TiaS (433 aa).

It belongs to the TiaS family.

Its subcellular location is the cytoplasm. The catalysed reaction is cytidine(34) in tRNA(Ile2) + agmatine + ATP + H2O = 2-agmatinylcytidine(34) in tRNA(Ile2) + AMP + 2 phosphate + 2 H(+). Its function is as follows. ATP-dependent agmatine transferase that catalyzes the formation of 2-agmatinylcytidine (agm2C) at the wobble position (C34) of tRNA(Ile2), converting the codon specificity from AUG to AUA. The sequence is that of tRNA(Ile2) 2-agmatinylcytidine synthetase TiaS from Methanopyrus kandleri (strain AV19 / DSM 6324 / JCM 9639 / NBRC 100938).